The primary structure comprises 87 residues: U3-theraphotoxin-Hhn1j (87 aa).

The first 24 residues, 1–24 (MVNMKASMFLTFAGLVLLFVVCYA), serve as a signal peptide directing secretion. Positions 25–52 (SESEEKEFPKEMLSSIFAVDNDFKQEER) are excised as a propeptide. Intrachain disulfides connect cysteine 54–cysteine 67, cysteine 61–cysteine 72, and cysteine 66–cysteine 79.

It belongs to the neurotoxin 10 (Hwtx-1) family. 51 (Hntx-8) subfamily. Hntx-8 sub-subfamily. As to expression, expressed by the venom gland.

It localises to the secreted. Its function is as follows. Ion channel inhibitor. The protein is U3-theraphotoxin-Hhn1j of Cyriopagopus hainanus (Chinese bird spider).